A 1021-amino-acid polypeptide reads, in one-letter code: Solute carrier family 12 member 3 (1021 aa).

The Cytoplasmic portion of the chain corresponds to 1 to 137 (MAELPTTETP…KNPEEPVRFG (137 aa)). Phosphoserine is present on Ser-43. The residue at position 46 (Thr-46) is a Phosphothreonine; by OXSR1 and STK39. Ser-49 carries the phosphoserine modification. Position 50 is a phosphothreonine (Thr-50). Residues Thr-55 and Thr-60 each carry the phosphothreonine; by OXSR1 and STK39 modification. Ser-73 is modified (phosphoserine). A Phosphoserine; by OXSR1 and STK39 modification is found at Ser-91. At Thr-124 the chain carries Phosphothreonine. Position 126 is a phosphoserine (Ser-126). Residues 138-167 (WVKGVMIRCMLNIWGVILYLRLPWITAQAG) traverse the membrane as a discontinuously helical segment. Leu-148 serves as a coordination point for Na(+). Asn-149 contributes to the polythiazide binding site. Trp-151 is a Na(+) binding site. Residues 168–189 (IVLTWIIILLSVTVTSITGLSI) form a helical membrane-spanning segment. Topologically, residues 190–220 (SAISTNGKVKSGGTYFLISRSLGPELGGSIG) are cytoplasmic. Residues 221-243 (LIFAFANAVGVAMHTVGFAETVR) form a helical membrane-spanning segment. Polythiazide contacts are provided by Asn-227 and His-234. The Extracellular segment spans residues 244-255 (DLLQEYGAPIVD). The next 2 helical transmembrane spans lie at 256–280 (PIND…AGME) and 281–303 (WESK…YLVG). The Extracellular portion of the chain corresponds to 304 to 338 (TLIPPSEDKASKGFFSYRADIFVQNLVPDWRGPDG). The discontinuously helical transmembrane segment at 339 to 360 (TFFGMFSIFFPSATGILAGANI) threads the bilayer. Thr-352 is a binding site for polythiazide. Chloride contacts are provided by Gly-353, Ile-354, and Leu-355. Asn-359 is a polythiazide binding site. Residues 361 to 371 (SGDLKDPAIAI) lie on the Cytoplasmic side of the membrane. Residues 372 to 393 (PKGTLMAIFWTTISYLAISATI) traverse the membrane as a helical segment. Residues 394 to 453 (GSCVVRDASGVLNDTVTPGWGACEGLACSYGWNFTECTQQHSCHYGLINYYQTMSMVSGF) lie on the Extracellular side of the membrane. Asn-406 carries an N-linked (GlcNAc...) asparagine glycan. Residues Cys-416 and Cys-421 are joined by a disulfide bond. Residue Asn-426 is glycosylated (N-linked (GlcNAc...) asparagine). Cys-430 and Cys-436 form a disulfide bridge. The chain crosses the membrane as a helical span at residues 454–477 (APLITAGIFGATLSSALACLVSAA). Residues Ala-464, Ser-467, and Ser-468 each contribute to the Na(+) site. Residues 478–507 (KVFQCLCEDQLYPLIGFFGKGYGKNKEPVR) lie on the Cytoplasmic side of the membrane. A helical transmembrane segment spans residues 508 to 522 (GYLLAYAIAVAFIII). At 523 to 527 (AELNT) the chain is on the extracellular side. The helical transmembrane segment at 528–544 (IAPIISNFFLCSYALIN) threads the bilayer. Tyr-540 lines the chloride pocket. Residues 545–567 (FSCFHASITNSPGWRPSFQYYNK) are Cytoplasmic-facing. The next 2 membrane-spanning stretches (helical) occupy residues 568-587 (WAAL…LTWW) and 588-599 (AALIAIGVVLFL). Topologically, residues 600–1021 (LLYVIYKKPE…QENVLTFYCQ (422 aa)) are cytoplasmic. Residues 615 to 630 (SVQAGSYNLALSYSVG) are scissor helix. The ATP site is built by Leu-648, Arg-655, Val-677, Gly-741, Leu-780, and Asn-781.

The protein belongs to the SLC12A transporter family. Homodimer; adopts a domain-swap conformation at the scissor helices connecting the transmembrane domain and C-terminal domain. Interacts with KLHL3. Interacts with IL18R1; this interaction is increased by IL18 treatment. Ubiquitinated; ubiquitination is essential for regulation of endocytosis. The BCR(KLHL3) complex was initially identified as a candidate ubiquitin ligase for SLC12A3. However, it was later shown that it is not the case. Post-translationally, phosphorylated at Thr-46, Thr-55, Thr-60 and Ser-91 by OXSR1/OSR1 and STK39/SPAK downstream of WNK4, promoting its activity. Phosphorylated in response to IL18. In terms of tissue distribution, predominantly expressed in the kidney (at protein level). Localizes to the distal convoluted tubules (at protein level). Not detected in normal aorta, but abundantly expressed in fatty streaks and advanced atherosclerotic lesions (at protein level).

Its subcellular location is the cell membrane. It localises to the apical cell membrane. The enzyme catalyses chloride(out) + Na(+)(out) = chloride(in) + Na(+)(in). With respect to regulation, phosphorylation by OXSR1/OSR1 and STK39/SPAK in kidney distal convoluted tubules downstream of WNK4 promotes its activity. Also activated by OXSR1/OSR1 and STK39/SPAK downstream of WNK3. Target of thiazide diuretics used in the treatment of high blood pressure. Thiazide drugs, such as polythiazide, specifically inhibit SLC12A3/NCC transporter activity by competing with chloride for binding and by locking SLC12A3/NCC in an outward-facing conformation. Functionally, electroneutral sodium and chloride ion cotransporter, which acts as a key mediator of sodium and chloride reabsorption in kidney distal convoluted tubules. Also acts as a receptor for the pro-inflammatory cytokine IL18, thereby contributing to IL18-induced cytokine production, including IFNG, IL6, IL18 and CCL2. May act either independently of IL18R1, or in a complex with IL18R1. The protein is Solute carrier family 12 member 3 of Homo sapiens (Human).